The chain runs to 152 residues: Regulatory protein RecX (152 aa).

It belongs to the RecX family.

It localises to the cytoplasm. In terms of biological role, modulates RecA activity. The chain is Regulatory protein RecX from Chromobacterium violaceum (strain ATCC 12472 / DSM 30191 / JCM 1249 / CCUG 213 / NBRC 12614 / NCIMB 9131 / NCTC 9757 / MK).